A 402-amino-acid chain; its full sequence is B3 domain-containing protein LFL1 (402 aa).

Residues 1 to 174 (MRGEERWQEQ…AAPRPSSHHT (174 aa)) are disordered. Residues 74–87 (ARPPTLAASAAAAS) show a composition bias toward low complexity. A compositionally biased stretch (pro residues) spans 88–102 (SPPPPPPPPIPPLPP). Low complexity-rich tracts occupy residues 103–139 (STSTSAARPTDMAGVTSKRRSSSASTSSSSGDGAAVS) and 156–169 (PRPAASLRPAAPRP). A DNA-binding region (TF-B3) is located at residues 181 to 284 (LQKELRYSDV…RFVIGAKKAG (104 aa)). The interval 381–402 (LHVTDDKSGHSLIPNPKSGPHM) is disordered.

Expressed in anthers, pollen grains and young developing embryos.

The protein resides in the nucleus. Transcription repressor involved in flowering time regulation. Represses the flowering activator EHD1 by binding specifically to the DNA sequence 5'-CATGCATG-3 of its promoter. The polypeptide is B3 domain-containing protein LFL1 (LFL1) (Oryza sativa subsp. japonica (Rice)).